The primary structure comprises 124 residues: Small ribosomal subunit protein uS12 (124 aa).

The tract at residues 8–28 (IRSAREKTDKKTKSPALKSCP) is disordered. Over residues 10–19 (SAREKTDKKT) the composition is skewed to basic and acidic residues. Position 89 is a 3-methylthioaspartic acid (Asp-89).

The protein belongs to the universal ribosomal protein uS12 family. In terms of assembly, part of the 30S ribosomal subunit. Contacts proteins S8 and S17. May interact with IF1 in the 30S initiation complex.

Functionally, with S4 and S5 plays an important role in translational accuracy. In terms of biological role, interacts with and stabilizes bases of the 16S rRNA that are involved in tRNA selection in the A site and with the mRNA backbone. Located at the interface of the 30S and 50S subunits, it traverses the body of the 30S subunit contacting proteins on the other side and probably holding the rRNA structure together. The combined cluster of proteins S8, S12 and S17 appears to hold together the shoulder and platform of the 30S subunit. This Arthrospira platensis (Spirulina platensis) protein is Small ribosomal subunit protein uS12.